Reading from the N-terminus, the 282-residue chain is Biotin synthase (282 aa).

A Radical SAM core domain is found at 1 to 228; the sequence is MQEIFLCSIS…NARLMVAGGR (228 aa). Residues cysteine 17, cysteine 21, and cysteine 24 each coordinate [4Fe-4S] cluster. 4 residues coordinate [2Fe-2S] cluster: cysteine 61, cysteine 96, cysteine 154, and arginine 221.

It belongs to the radical SAM superfamily. Biotin synthase family. In terms of assembly, homodimer. The cofactor is [4Fe-4S] cluster. Requires [2Fe-2S] cluster as cofactor.

It catalyses the reaction (4R,5S)-dethiobiotin + (sulfur carrier)-SH + 2 reduced [2Fe-2S]-[ferredoxin] + 2 S-adenosyl-L-methionine = (sulfur carrier)-H + biotin + 2 5'-deoxyadenosine + 2 L-methionine + 2 oxidized [2Fe-2S]-[ferredoxin]. It participates in cofactor biosynthesis; biotin biosynthesis; biotin from 7,8-diaminononanoate: step 2/2. Catalyzes the conversion of dethiobiotin (DTB) to biotin by the insertion of a sulfur atom into dethiobiotin via a radical-based mechanism. The chain is Biotin synthase from Helicobacter pylori (strain J99 / ATCC 700824) (Campylobacter pylori J99).